The primary structure comprises 221 residues: Uracil-DNA glycosylase (221 aa).

Aspartate 65 serves as the catalytic Proton acceptor.

The protein belongs to the uracil-DNA glycosylase (UDG) superfamily. UNG family.

It is found in the cytoplasm. It carries out the reaction Hydrolyzes single-stranded DNA or mismatched double-stranded DNA and polynucleotides, releasing free uracil.. In terms of biological role, excises uracil residues from the DNA which can arise as a result of misincorporation of dUMP residues by DNA polymerase or due to deamination of cytosine. The polypeptide is Uracil-DNA glycosylase (Christiangramia forsetii (strain DSM 17595 / CGMCC 1.15422 / KT0803) (Gramella forsetii)).